A 381-amino-acid polypeptide reads, in one-letter code: S-adenosylmethionine synthase (381 aa).

Residue histidine 15 participates in ATP binding. Aspartate 17 is a Mg(2+) binding site. Glutamate 43 contacts K(+). Glutamate 56 and glutamine 99 together coordinate L-methionine. Positions 99-109 (QSLDIAQGVDN) are flexible loop. Residues 164–166 (DGK), 230–231 (RF), aspartate 239, 245–246 (RK), and lysine 266 contribute to the ATP site. Position 239 (aspartate 239) interacts with L-methionine. Lysine 270 contacts L-methionine.

Belongs to the AdoMet synthase family. As to quaternary structure, homotetramer; dimer of dimers. It depends on Mg(2+) as a cofactor. The cofactor is K(+).

It localises to the cytoplasm. The enzyme catalyses L-methionine + ATP + H2O = S-adenosyl-L-methionine + phosphate + diphosphate. It functions in the pathway amino-acid biosynthesis; S-adenosyl-L-methionine biosynthesis; S-adenosyl-L-methionine from L-methionine: step 1/1. Catalyzes the formation of S-adenosylmethionine (AdoMet) from methionine and ATP. The overall synthetic reaction is composed of two sequential steps, AdoMet formation and the subsequent tripolyphosphate hydrolysis which occurs prior to release of AdoMet from the enzyme. The sequence is that of S-adenosylmethionine synthase from Legionella jeonii.